We begin with the raw amino-acid sequence, 367 residues long: Succinyl-diaminopimelate desuccinylase (367 aa).

His-67 provides a ligand contact to Zn(2+). Asp-69 is an active-site residue. Asp-98 provides a ligand contact to Zn(2+). The Proton acceptor role is filled by Glu-128. Zn(2+)-binding residues include Glu-129, Glu-157, and His-342.

Belongs to the peptidase M20A family. DapE subfamily. As to quaternary structure, homodimer. Zn(2+) is required as a cofactor. The cofactor is Co(2+).

The catalysed reaction is N-succinyl-(2S,6S)-2,6-diaminopimelate + H2O = (2S,6S)-2,6-diaminopimelate + succinate. Its pathway is amino-acid biosynthesis; L-lysine biosynthesis via DAP pathway; LL-2,6-diaminopimelate from (S)-tetrahydrodipicolinate (succinylase route): step 3/3. Functionally, catalyzes the hydrolysis of N-succinyl-L,L-diaminopimelic acid (SDAP), forming succinate and LL-2,6-diaminopimelate (DAP), an intermediate involved in the bacterial biosynthesis of lysine and meso-diaminopimelic acid, an essential component of bacterial cell walls. The protein is Succinyl-diaminopimelate desuccinylase of Campylobacter hominis (strain ATCC BAA-381 / DSM 21671 / CCUG 45161 / LMG 19568 / NCTC 13146 / CH001A).